Here is a 271-residue protein sequence, read N- to C-terminus: MNTLEEVDESTHIFNALMSLMRKFLFRVLCVGPIPTNISFIMDGNRRFAKKHNLIGLDAGHRAGFISVKYILQYCKEIGVPYVTLHAFGMDNFKRGPEEVKCVMDLMLEKVELAIDQAVSGNMNGVRIIFAGDLDSLNEHFRAATKKLMELTEENRDLIVVVCVAYSTSLEIVHAVRKSCVRKCTNGDDLVLLELSDVEECMYTSIVPVPDLVIRTGGGDRLSNFMTWQTSRSLLHRTEALWPELGLWHLVWAILKFQRMQDYLTKKKKLD.

The helical transmembrane segment at 24 to 41 threads the bilayer; the sequence is FLFRVLCVGPIPTNISFI.

It belongs to the UPP synthase family. It depends on Mg(2+) as a cofactor.

It localises to the endoplasmic reticulum membrane. It functions in the pathway protein modification; protein glycosylation. Catalyzes cis-prenyl chain elongation to produce the polyprenyl backbone of dolichol, a glycosyl carrier-lipid required for the biosynthesis of several classes of glycoprotein. The polypeptide is Dehydrodolichyl diphosphate synthase 7 (Arabidopsis thaliana (Mouse-ear cress)).